The following is a 231-amino-acid chain: MAKKKAFIPLLCLTSIVFLPWCISFTFKKSLESWITHWYNTKESEIFLNTIQEKSILKKFLEFEELFLLDEMLKEYPETRLQNLRIEIYKETIQLIQTNNQDHIHTILHFCTNIICFLILSVYSIRGNQELIILNSWVQEFLYNLSDTIKAFSILFLIEFCVGYHSTGGWELMIGSVYKDFGFIPNDHIISFLVSILPAILDTIFKYWIFRYLNRVSPSLVLIYDSIPFQE.

The next 4 helical transmembrane spans lie at 7 to 27 (FIPL…SFTF), 104 to 124 (IHTI…SVYS), 154 to 174 (ILFL…ELMI), and 189 to 209 (IISF…KYWI).

Belongs to the CemA family.

It is found in the plastid. It localises to the chloroplast inner membrane. It carries out the reaction K(+)(in) + H(+)(out) = K(+)(out) + H(+)(in). Functionally, contributes to K(+)/H(+) antiport activity by supporting proton efflux to control proton extrusion and homeostasis in chloroplasts in a light-dependent manner to modulate photosynthesis. Prevents excessive induction of non-photochemical quenching (NPQ) under continuous-light conditions. Indirectly promotes efficient inorganic carbon uptake into chloroplasts. The sequence is that of Potassium/proton antiporter CemA from Pisum sativum (Garden pea).